The following is a 26-amino-acid chain: Dermaseptin-J3 (26 aa).

Val26 is modified (valine amide).

Expressed by the skin glands.

Its subcellular location is the secreted. Its function is as follows. Has antimicrobial activity. The sequence is that of Dermaseptin-J3 from Phasmahyla jandaia (Jandaia leaf frog).